A 559-amino-acid chain; its full sequence is Glucans biosynthesis protein G (559 aa).

The signal sequence occupies residues 1-37 (MVSLLSCGTSASSHIVKKALTRLSLAMAAGLCFNLAA).

It belongs to the OpgD/OpgG family.

The protein localises to the periplasm. Its pathway is glycan metabolism; osmoregulated periplasmic glucan (OPG) biosynthesis. In terms of biological role, involved in the biosynthesis of osmoregulated periplasmic glucans (OPGs). The sequence is that of Glucans biosynthesis protein G from Shewanella frigidimarina (strain NCIMB 400).